The primary structure comprises 257 residues: Undecaprenyl-diphosphatase (257 aa).

Transmembrane regions (helical) follow at residues 4-24 (LFKA…PISS), 51-71 (HVGT…NIFF), 78-98 (LFII…HDLI), 106-126 (LIIV…EKVG), 133-153 (ITLS…IPGV), 171-191 (AYAA…AAML), 207-227 (LFII…KFLL), and 235-255 (LNLF…LYFF).

This sequence belongs to the UppP family.

The protein resides in the cell inner membrane. The catalysed reaction is di-trans,octa-cis-undecaprenyl diphosphate + H2O = di-trans,octa-cis-undecaprenyl phosphate + phosphate + H(+). Its function is as follows. Catalyzes the dephosphorylation of undecaprenyl diphosphate (UPP). Confers resistance to bacitracin. The protein is Undecaprenyl-diphosphatase of Thermodesulfovibrio yellowstonii (strain ATCC 51303 / DSM 11347 / YP87).